The primary structure comprises 595 residues: O-phosphoseryl-tRNA(Sec) selenium transferase (595 aa).

Residue arginine 75 coordinates pyridoxal 5'-phosphate. Residues 96–106 (GRSGDLFSEQP) form a phosphate loop (P-loop) region. 3 residues coordinate substrate: arginine 97, serine 98, and glutamine 105. Polar residues predominate over residues 174–187 (RTVTKDSTSATSAA). Disordered regions lie at residues 174–208 (RTVT…TSLP) and 257–278 (STNR…TPTS). Over residues 196–205 (EADRDRHDRT) the composition is skewed to basic and acidic residues. Arginine 358 is a binding site for tRNA. Lysine 371 is modified (N6-(pyridoxal phosphate)lysine). Arginine 400 is a substrate binding site.

It belongs to the SepSecS family. Homotetramer composed of two homodimers. The cofactor is pyridoxal 5'-phosphate.

It localises to the cytoplasm. The catalysed reaction is O-phospho-L-seryl-tRNA(Sec) + selenophosphate + H2O = L-selenocysteinyl-tRNA(Sec) + 2 phosphate. It functions in the pathway aminoacyl-tRNA biosynthesis; selenocysteinyl-tRNA(Sec) biosynthesis; selenocysteinyl-tRNA(Sec) from L-seryl-tRNA(Sec) (archaeal/eukaryal route): step 2/2. Its function is as follows. Converts O-phosphoseryl-tRNA(Sec) to selenocysteinyl-tRNA(Sec) required for selenoprotein biosynthesis. The protein is O-phosphoseryl-tRNA(Sec) selenium transferase of Leishmania donovani.